A 150-amino-acid chain; its full sequence is UPF0756 membrane protein HI_1074 (150 aa).

The next 4 helical transmembrane spans lie at methionine 1–leucine 21, tyrosine 52–glycine 72, glycine 81–alanine 101, and isoleucine 123–leucine 143.

Belongs to the UPF0756 family.

Its subcellular location is the cell membrane. In Haemophilus influenzae (strain ATCC 51907 / DSM 11121 / KW20 / Rd), this protein is UPF0756 membrane protein HI_1074.